The sequence spans 557 residues: Dihydroxy-acid dehydratase (557 aa).

Cys47 is a [2Fe-2S] cluster binding site. Asp79 contributes to the Mg(2+) binding site. Residue Cys120 participates in [2Fe-2S] cluster binding. Positions 121 and 122 each coordinate Mg(2+). Position 122 is an N6-carboxylysine (Lys122). Cys192 serves as a coordination point for [2Fe-2S] cluster. Glu444 is a Mg(2+) binding site. Residue Ser470 is the Proton acceptor of the active site.

This sequence belongs to the IlvD/Edd family. As to quaternary structure, homodimer. It depends on [2Fe-2S] cluster as a cofactor. The cofactor is Mg(2+).

It catalyses the reaction (2R)-2,3-dihydroxy-3-methylbutanoate = 3-methyl-2-oxobutanoate + H2O. The enzyme catalyses (2R,3R)-2,3-dihydroxy-3-methylpentanoate = (S)-3-methyl-2-oxopentanoate + H2O. Its pathway is amino-acid biosynthesis; L-isoleucine biosynthesis; L-isoleucine from 2-oxobutanoate: step 3/4. It functions in the pathway amino-acid biosynthesis; L-valine biosynthesis; L-valine from pyruvate: step 3/4. Functions in the biosynthesis of branched-chain amino acids. Catalyzes the dehydration of (2R,3R)-2,3-dihydroxy-3-methylpentanoate (2,3-dihydroxy-3-methylvalerate) into 2-oxo-3-methylpentanoate (2-oxo-3-methylvalerate) and of (2R)-2,3-dihydroxy-3-methylbutanoate (2,3-dihydroxyisovalerate) into 2-oxo-3-methylbutanoate (2-oxoisovalerate), the penultimate precursor to L-isoleucine and L-valine, respectively. The chain is Dihydroxy-acid dehydratase from Synechococcus sp. (strain CC9605).